We begin with the raw amino-acid sequence, 481 residues long: Proline--tRNA ligase (481 aa).

The protein belongs to the class-II aminoacyl-tRNA synthetase family. ProS type 3 subfamily. Homodimer.

The protein resides in the cytoplasm. It carries out the reaction tRNA(Pro) + L-proline + ATP = L-prolyl-tRNA(Pro) + AMP + diphosphate. In terms of biological role, catalyzes the attachment of proline to tRNA(Pro) in a two-step reaction: proline is first activated by ATP to form Pro-AMP and then transferred to the acceptor end of tRNA(Pro). In Prosthecochloris aestuarii (strain DSM 271 / SK 413), this protein is Proline--tRNA ligase.